Reading from the N-terminus, the 450-residue chain is UDP-N-acetylmuramoylalanine--D-glutamate ligase (450 aa).

ATP is bound at residue 119-125 (GSNGKTT).

This sequence belongs to the MurCDEF family.

It localises to the cytoplasm. It carries out the reaction UDP-N-acetyl-alpha-D-muramoyl-L-alanine + D-glutamate + ATP = UDP-N-acetyl-alpha-D-muramoyl-L-alanyl-D-glutamate + ADP + phosphate + H(+). The protein operates within cell wall biogenesis; peptidoglycan biosynthesis. Cell wall formation. Catalyzes the addition of glutamate to the nucleotide precursor UDP-N-acetylmuramoyl-L-alanine (UMA). This is UDP-N-acetylmuramoylalanine--D-glutamate ligase from Bacillus cereus (strain ATCC 10987 / NRS 248).